A 366-amino-acid chain; its full sequence is Ribosomal RNA large subunit methyltransferase M (366 aa).

S-adenosyl-L-methionine contacts are provided by residues Ser188, 221 to 224 (CPGG), Asp240, Asp260, and Asp277. Catalysis depends on Lys306, which acts as the Proton acceptor.

Belongs to the class I-like SAM-binding methyltransferase superfamily. RNA methyltransferase RlmE family. RlmM subfamily. In terms of assembly, monomer.

The protein localises to the cytoplasm. It catalyses the reaction cytidine(2498) in 23S rRNA + S-adenosyl-L-methionine = 2'-O-methylcytidine(2498) in 23S rRNA + S-adenosyl-L-homocysteine + H(+). Functionally, catalyzes the 2'-O-methylation at nucleotide C2498 in 23S rRNA. This Musicola paradisiaca (strain Ech703) (Dickeya paradisiaca) protein is Ribosomal RNA large subunit methyltransferase M.